The sequence spans 392 residues: Phosphopentomutase (392 aa).

Residues D14, D286, H291, D327, H328, and H339 each coordinate Mn(2+).

Belongs to the phosphopentomutase family. It depends on Mn(2+) as a cofactor.

It is found in the cytoplasm. It catalyses the reaction 2-deoxy-alpha-D-ribose 1-phosphate = 2-deoxy-D-ribose 5-phosphate. The catalysed reaction is alpha-D-ribose 1-phosphate = D-ribose 5-phosphate. The protein operates within carbohydrate degradation; 2-deoxy-D-ribose 1-phosphate degradation; D-glyceraldehyde 3-phosphate and acetaldehyde from 2-deoxy-alpha-D-ribose 1-phosphate: step 1/2. Isomerase that catalyzes the conversion of deoxy-ribose 1-phosphate (dRib-1-P) and ribose 1-phosphate (Rib-1-P) to deoxy-ribose 5-phosphate (dRib-5-P) and ribose 5-phosphate (Rib-5-P), respectively. The protein is Phosphopentomutase of Staphylococcus aureus (strain Mu3 / ATCC 700698).